Here is a 240-residue protein sequence, read N- to C-terminus: Thiopurine S-methyltransferase (240 aa).

24 to 35 contributes to the S-adenosyl-L-methionine binding site; the sequence is WQDKWVTRHIAF. Residue Phe-35 participates in substrate binding. Position 53 is an N6-acetyllysine (Lys-53). Residues Leu-64, Glu-85, 129–130, and Arg-147 each bind S-adenosyl-L-methionine; that span reads SI.

This sequence belongs to the class I-like SAM-binding methyltransferase superfamily. TPMT family. Monomer.

Its subcellular location is the cytoplasm. It catalyses the reaction S-adenosyl-L-methionine + a thiopurine = S-adenosyl-L-homocysteine + a thiopurine S-methylether.. It carries out the reaction mercaptopurine + S-adenosyl-L-methionine = 6-methylthiopurine + S-adenosyl-L-homocysteine + H(+). Catalyzes the S-methylation of thiopurine drugs such as 6-mercaptopurine (also called mercaptopurine, 6-MP or its brand name Purinethol) using S-adenosyl-L-methionine as the methyl donor. TPMT activity modulates the cytotoxic effects of thiopurine prodrugs. A natural substrate for this enzyme has yet to be identified. This is Thiopurine S-methyltransferase (Tpmt) from Rattus norvegicus (Rat).